The following is a 61-amino-acid chain: Small ribosomal subunit protein uS14 (61 aa).

4 residues coordinate Zn(2+): Cys24, Cys27, Cys40, and Cys43.

The protein belongs to the universal ribosomal protein uS14 family. Zinc-binding uS14 subfamily. As to quaternary structure, part of the 30S ribosomal subunit. Contacts proteins S3 and S10. Zn(2+) is required as a cofactor.

Binds 16S rRNA, required for the assembly of 30S particles and may also be responsible for determining the conformation of the 16S rRNA at the A site. This Anoxybacillus flavithermus (strain DSM 21510 / WK1) protein is Small ribosomal subunit protein uS14.